The primary structure comprises 281 residues: Lectin CaBo (281 aa).

The signal sequence occupies residues 1-29; sequence MAISKKSSLYLPIFTFITMLLMVVNKVSS. Asp-119 provides a ligand contact to Ca(2+). Arg-139 contacts a carbohydrate. Positions 149-163 are cleaved as a propeptide — removed in mature form; sequence IIKNSTTIDFNAAYN. Mn(2+) contacts are provided by Glu-171 and Asp-173. Ca(2+)-binding residues include Asp-173, Tyr-175, Asn-177, and Asp-182. Tyr-175 is a binding site for a carbohydrate. 2 residues coordinate Mn(2+): Asp-182 and His-187. 262–263 lines the a carbohydrate pocket; it reads LY.

The protein belongs to the leguminous lectin family. In terms of assembly, equilibrium between homodimer and homotetramer. The mature chain consists of residues 164-281 followed by residues 30-148. Concanavalin A-like lectins of the Diocleinae subtribe undergo proteolytic processing referred to as circular permutation. The propeptide is split into an N-terminal and a C-terminal part, the gamma and beta chain, respectively. These are then religated in beta-gamma order to form the mature alpha chain. The beta and gamma chains can often be detected in cell extracts.

Functionally, D-mannose-specific lectin. The protein is Lectin CaBo of Canavalia bonariensis.